A 147-amino-acid chain; its full sequence is Large ribosomal subunit protein bL21 (147 aa).

The disordered stretch occupies residues 115–147 (KSIKVGKPTPKSSSKKEETVKKETKPKSEKSTN). Residues 128 to 147 (SKKEETVKKETKPKSEKSTN) show a composition bias toward basic and acidic residues.

This sequence belongs to the bacterial ribosomal protein bL21 family. In terms of assembly, part of the 50S ribosomal subunit. Contacts protein L20.

Its function is as follows. This protein binds to 23S rRNA in the presence of protein L20. This chain is Large ribosomal subunit protein bL21, found in Prochlorococcus marinus (strain MIT 9215).